A 73-amino-acid polypeptide reads, in one-letter code: UPF0435 protein lin1819 (73 aa).

This sequence belongs to the UPF0435 family.

The polypeptide is UPF0435 protein lin1819 (Listeria innocua serovar 6a (strain ATCC BAA-680 / CLIP 11262)).